The chain runs to 262 residues: 3-deoxy-manno-octulosonate cytidylyltransferase (262 aa).

This sequence belongs to the KdsB family.

It localises to the cytoplasm. It catalyses the reaction 3-deoxy-alpha-D-manno-oct-2-ulosonate + CTP = CMP-3-deoxy-beta-D-manno-octulosonate + diphosphate. The protein operates within nucleotide-sugar biosynthesis; CMP-3-deoxy-D-manno-octulosonate biosynthesis; CMP-3-deoxy-D-manno-octulosonate from 3-deoxy-D-manno-octulosonate and CTP: step 1/1. It functions in the pathway bacterial outer membrane biogenesis; lipopolysaccharide biosynthesis. Functionally, activates KDO (a required 8-carbon sugar) for incorporation into bacterial lipopolysaccharide in Gram-negative bacteria. The polypeptide is 3-deoxy-manno-octulosonate cytidylyltransferase (Koribacter versatilis (strain Ellin345)).